The primary structure comprises 668 residues: Methionine--tRNA ligase (668 aa).

Positions 11-21 (AYTNGPLHIGH) match the 'HIGH' region motif. Zn(2+) contacts are provided by Cys-146, Cys-149, Cys-159, and Cys-162. The 'KMSKS' region motif lies at 332 to 336 (KMSTS). Residue Thr-335 participates in ATP binding. The tRNA-binding domain maps to 567–668 (EFNRLDLRVG…REVEPGERIR (102 aa)).

This sequence belongs to the class-I aminoacyl-tRNA synthetase family. MetG type 1 subfamily. Homodimer. Requires Zn(2+) as cofactor.

The protein localises to the cytoplasm. It catalyses the reaction tRNA(Met) + L-methionine + ATP = L-methionyl-tRNA(Met) + AMP + diphosphate. Is required not only for elongation of protein synthesis but also for the initiation of all mRNA translation through initiator tRNA(fMet) aminoacylation. The sequence is that of Methionine--tRNA ligase from Methanopyrus kandleri (strain AV19 / DSM 6324 / JCM 9639 / NBRC 100938).